A 791-amino-acid chain; its full sequence is Disintegrin and metalloproteinase domain-containing protein 1a (791 aa).

The signal sequence occupies residues 1–65 (MSVAAAGRGF…LLIFLPSTFC (65 aa)). An N-linked (GlcNAc...) asparagine glycan is attached at N72. The disordered stretch occupies residues 201–220 (CSVTPKDSPGDTSHPPRSRK). The region spanning 235–429 (KYVEMFVVVN…HRGACLLDEP (195 aa)) is the Peptidase M12B domain. N256 is a glycosylation site (N-linked (GlcNAc...) asparagine). Disulfide bonds link C345–C424, C385–C408, and C387–C393. H370 is a binding site for Zn(2+). The active site involves E371. Residues H374 and H380 each coordinate Zn(2+). N-linked (GlcNAc...) asparagine glycosylation is found at N407 and N484. The Disintegrin domain occupies 438-522 (AANCGNGVVE…ECPANSYMQD (85 aa)). A disulfide bond links C494 and C514. N630 carries an N-linked (GlcNAc...) asparagine glycan. Positions 663-697 (LQYNCEPQEMCHGNGVCNNFKHCHCDAGFAPPDCS) constitute an EGF-like domain. 3 disulfide bridges follow: C667–C679, C673–C685, and C687–C696. The helical transmembrane segment at 741-761 (VMVLVVPIFLVVLLCCLMLIA) threads the bilayer. Residues 762–791 (YLWSEVQEVVSPPSSSESSSSSSWSDSDSQ) are Cytoplasmic-facing. The disordered stretch occupies residues 772-791 (SPPSSSESSSSSSWSDSDSQ).

As to quaternary structure, heterodimer with ADAM2/fertilin subunit beta. Testis.

It localises to the membrane. Functionally, may be involved in sperm-egg fusion. This is Disintegrin and metalloproteinase domain-containing protein 1a (Adam1a) from Mus musculus (Mouse).